A 271-amino-acid chain; its full sequence is Cytochrome b termination protein 1 (271 aa).

It localises to the mitochondrion. Functionally, involved in 5'-end processing of mitochondrial COB, 15S rRNA, and RPM1 transcript. May also have a role in 3'-end processing of the COB pre-mRNA. This chain is Cytochrome b termination protein 1 (CBT1), found in Saccharomyces cerevisiae (strain ATCC 204508 / S288c) (Baker's yeast).